Here is an 836-residue protein sequence, read N- to C-terminus: MSRFFVSGYDSESSSEEEDLLTSSEEELMSSEQESDSEFDDEFANDDDSDSSDSDSDGRPSGPAYFLKSSFRKGAGGDSDSDSEDEGRRVVKSAKEKLTDDMKDAVEAVNSAKRQENWISALTEFERLGRLLVRAGQQGFGTPNFYIKCLVDLEAYLIETTANEKESTRKMNANLARAFTSLKQRVKKQVKEFSHLVELYKSEPELFDKEEPVETIEKDAEIQATPLASSTGRALSPVFATLKSVAETRGKKNIDKFEQVQILEDLLEEVSPKGSPFEIISIYQMLLSIRFDASSHHAFMPLDQWQKNKDTLNDLLDFLEKHSNEYQVSELGTASDDIDLEPPANADGIRILPGSVTSHIERLDDEFIRYLQNTDPHSLEYIDRLKDEKDTYNLVVRGQLYVEKTTPDHVRGTYQGEQLARIVMRRMNHIYYKPDQLIKANESEAWRHLSGDSQIVAKNSEPKDVINGLAEFLSKQDGAIYPKGALLFSVYYHAVNNDYSVARDMFLSSQVHQGINNADSSIQVLYNRAMVQLGLSAFRYGNIEESHQALNEIANSQRLKELLGQGFNSKYPSQATVAEKQRLLPFHMHINLELLECVFMTCSLLIEIPQLAAASNSTKESRRKTNIKSFKSKLEFHDRQYFTGPPESIKDHIVHASISLQKGDWHNAYKLLSTIKIWKLLPNNDQLLEMMRGKLQVEGLRTYIFTYKSIYTKLSVVKLAKIFDINEEEVLSIVDKMISSGEVSASLSDDKKSINFVSSEHLQRTRLQELAIVMNEKIGLLTDKNEKTASNGHGRKTTQQQQQQQQKEQREQTHDENIKFRYANVNTNNDEFQTIA.

Residues 1–97 are disordered; sequence MSRFFVSGYD…RRVVKSAKEK (97 aa). Acidic residues predominate over residues 13-55; sequence SSSEEEDLLTSSEEELMSSEQESDSEFDDEFANDDDSDSSDSD. The span at 86–97 shows a compositional bias: basic and acidic residues; it reads EGRRVVKSAKEK. The 176-residue stretch at 586-761 folds into the PCI domain; that stretch reads FHMHINLELL…KSINFVSSEH (176 aa). Residues 783-817 form a disordered region; it reads DKNEKTASNGHGRKTTQQQQQQQQKEQREQTHDEN. Residues 797 to 806 show a composition bias toward low complexity; it reads TTQQQQQQQQ. Residues 807 to 817 show a composition bias toward basic and acidic residues; that stretch reads KEQREQTHDEN.

It belongs to the eIF-3 subunit C family. Component of the eukaryotic translation initiation factor 3 (eIF-3) complex.

Its subcellular location is the cytoplasm. Functionally, component of the eukaryotic translation initiation factor 3 (eIF-3) complex, which is involved in protein synthesis of a specialized repertoire of mRNAs and, together with other initiation factors, stimulates binding of mRNA and methionyl-tRNAi to the 40S ribosome. The eIF-3 complex specifically targets and initiates translation of a subset of mRNAs involved in cell proliferation. The sequence is that of Eukaryotic translation initiation factor 3 subunit C from Meyerozyma guilliermondii (strain ATCC 6260 / CBS 566 / DSM 6381 / JCM 1539 / NBRC 10279 / NRRL Y-324) (Yeast).